Consider the following 599-residue polypeptide: Calcium-dependent protein kinase 10 (599 aa).

Residue Gly-2 is the site of N-myristoyl glycine attachment. The interval 27 to 110 (RQDGDDALPG…PRPRVPPVKR (84 aa)) is disordered. Over residues 74 to 84 (VSTTDTASAEQ) the composition is skewed to polar residues. Positions 87-98 (SKSSAGSDSGEA) are enriched in low complexity. Residues 133–391 (YSLGRKLGQG…AHEVLRHPWV (259 aa)) form the Protein kinase domain. ATP is bound by residues 139-147 (LGQGQFGTT) and Lys-162. Catalysis depends on Asp-257, which acts as the Proton acceptor. Residues 397-427 (APDKPLDSAVLSRMKQFSAMNKLKKMALRVI) are autoinhibitory domain. EF-hand domains are found at residues 434 to 469 (DEIAGLKEMFKMIDTDNSGQITFEELKVGLKKVGAN), 470 to 505 (LQESEIYALMQAADVDNSGTIDYGEFIAATLHMNKI), 506 to 541 (EREDHLFAAFQYFDKDGSGYITADELQLACEEFGLG), and 544 to 575 (QLEEMIREVDEDNDGRIDYNEFVAMMQKPTMG). Residues Asp-447, Asp-449, Ser-451, Gln-453, Glu-458, Asp-483, Asp-485, Ser-487, Thr-489, Glu-494, Asp-519, Asp-521, Ser-523, Tyr-525, Glu-530, Asp-553, Asp-555, Asp-557, Arg-559, and Glu-564 each coordinate Ca(2+).

This sequence belongs to the protein kinase superfamily. Ser/Thr protein kinase family. CDPK subfamily. Expressed in roots.

The protein localises to the membrane. It carries out the reaction L-seryl-[protein] + ATP = O-phospho-L-seryl-[protein] + ADP + H(+). The enzyme catalyses L-threonyl-[protein] + ATP = O-phospho-L-threonyl-[protein] + ADP + H(+). Activated by calcium. Autophosphorylation may play an important role in the regulation of the kinase activity. In terms of biological role, may play a role in signal transduction pathways that involve calcium as a second messenger. This is Calcium-dependent protein kinase 10 from Oryza sativa subsp. japonica (Rice).